A 1163-amino-acid chain; its full sequence is Protein phosphatase 1 regulatory subunit 26 (1163 aa).

A compositionally biased stretch (basic and acidic residues) spans 65 to 83 (HERLTQRGQRAERSRDTRL). 7 disordered regions span residues 65–91 (HERLTQRGQRAERSRDTRLAPKPAVCK), 144–253 (RGGA…TSAR), 266–393 (RKPP…KKKL), 463–496 (APMEGSDRPPSRNPLFCPQPMPPRSEGDSSNIDS), 514–653 (VGSP…DEDL), 672–929 (RDPR…TATA), and 1073–1163 (TQPG…GLKL). 2 stretches are compositionally biased toward polar residues: residues 163–179 (HSSTLPIPCPSQLTPGS) and 189–201 (DQGSTSPASMSSE). Over residues 208–236 (IRAEIEQFLNEKRQHENPKCDGFVDKKSD) the composition is skewed to basic and acidic residues. Residues 273–297 (KMSTQQRNFQPKPTTEPETPVSTKL) are compositionally biased toward polar residues. The span at 315-324 (MPARRSKRIR) shows a compositional bias: basic residues. The span at 515–535 (GSPQPAQGPLSSPGPSGQPGI) shows a compositional bias: low complexity. Basic and acidic residues-rich tracts occupy residues 566–581 (KIREGRESTQDADHIQ) and 634–645 (ATEKESSEDKSS). The span at 672–682 (RDPRASCKKVR) shows a compositional bias: basic residues. The span at 766–780 (TGASGHPPSASSPTS) shows a compositional bias: low complexity. The segment covering 783 to 792 (SAVDSDDSIE) has biased composition (acidic residues). Basic and acidic residues-rich tracts occupy residues 793 to 808 (LEIRRFLAEKAKESIR) and 850 to 859 (EGRRGPERAR). Positions 860-871 (TQATGLLSQSGK) are enriched in polar residues. Residues 901–910 (SSAKASPPSR) show a composition bias toward low complexity. Basic and acidic residues predominate over residues 1105 to 1131 (QQDRRNSASEDKVLDLRYRHRVDREPQ). Phosphoserine is present on Ser-1111. Composition is skewed to polar residues over residues 1133–1146 (QETLGSDASEFSDT) and 1154–1163 (ATVSSKGLKL).

In terms of assembly, interacts with UTP20 and PPP1CA.

It localises to the nucleus. The protein resides in the nucleolus. In terms of biological role, inhibits phosphatase activity of protein phosphatase 1 (PP1) complexes. May positively regulate cell proliferation. The protein is Protein phosphatase 1 regulatory subunit 26 (Ppp1r26) of Mus musculus (Mouse).